Here is a 120-residue protein sequence, read N- to C-terminus: Glycine cleavage system H protein (120 aa).

Positions 17 to 99 (VATVGITNYA…QGAGWFFKLK (83 aa)) constitute a Lipoyl-binding domain. An N6-lipoyllysine modification is found at Lys-58.

Belongs to the GcvH family. As to quaternary structure, the glycine cleavage system is composed of four proteins: P, T, L and H. Requires (R)-lipoate as cofactor.

Functionally, the glycine cleavage system catalyzes the degradation of glycine. The H protein shuttles the methylamine group of glycine from the P protein to the T protein. In Rhizobium etli (strain ATCC 51251 / DSM 11541 / JCM 21823 / NBRC 15573 / CFN 42), this protein is Glycine cleavage system H protein.